The primary structure comprises 558 residues: Deleted in azoospermia protein 2 (558 aa).

The segment covering 1–10 (MSAANPETPN) has biased composition (polar residues). The interval 1-27 (MSAANPETPNSTISREASTQSSSAAAS) is disordered. Positions 11 to 27 (STISREASTQSSSAAAS) are enriched in low complexity. The RRM domain maps to 40-115 (NTVFVGGIDA…KKLKLGPAIR (76 aa)). DAZ domains follow at residues 167 to 190 (AYSAYPHSPGQVITGCQLLVYNYQ), 191 to 214 (EYPTYPDSAFQVTTGYQLPVYNYQ), 215 to 238 (PFPAYPRSPFQVTAGYQLPVYNYQ), 239 to 262 (AFPAYPNSPFQVATGYQFPVYNYQ), 263 to 286 (PFPAYPSSPFQVTAGYQLPVYNYQ), 287 to 310 (AFPAYPNSPFQVATGYQFPVYNYQ), 311 to 334 (AFPAYPNSPVQVTTGYQLPVYNYQ), 335 to 358 (AFPAYPNSPVQVTTGYQLPVYNYQ), 359 to 382 (AFPAYPSSPFQVTTGYQLPVYNYQ), 383 to 406 (AFPAYPSSPFQVTTGYQLPVYNYQ), 407 to 430 (AFPAYPSSPFQVTTGYQLPVYNYQ), 431 to 454 (AFPAYPSSPFQVTTGYQLPVYNYQ), 455 to 478 (AFPAYPSSPFQVTTGYQLPVYNYQ), 479 to 502 (AFPAYPSSPFQVTTGYQLPVYNYQ), and 503 to 526 (AFPAYPNSAVQVTTGYQFHVYNYQ).

This sequence belongs to the RRM DAZ family. In terms of assembly, forms a heterodimer with BOLL and DAZL. Interacts with PUM2, DAZAP1, DAZAP2, DZIP1 and DZIP3. In terms of tissue distribution, testis specific.

It localises to the cytoplasm. The protein resides in the nucleus. Functionally, RNA-binding protein that plays an essential role in spermatogenesis. May act by binding to the 3'-UTR of mRNAs and regulating their translation. This is Deleted in azoospermia protein 2 (DAZ2) from Homo sapiens (Human).